The sequence spans 299 residues: Telomere repeat-binding factor 2 (299 aa).

Residues M1–L61 enclose the HTH myb-type domain. A DNA-binding region (H-T-H motif) is located at residues W28–S57. Residues L93–C116 are disordered. Residues S121–S189 form the H15 domain. A coiled-coil region spans residues E243 to K288.

The protein belongs to the histone H1/H5 family. SMH subfamily. As to quaternary structure, forms a homodimer and heterodimers with TRB1 or TRB3. Interacts with TRB1 and TRB3. Ubiquitous.

Its subcellular location is the nucleus. The protein resides in the nucleolus. It is found in the chromosome. In terms of biological role, binds preferentially double-stranded telomeric repeats, but it can also bind to the single G-rich telomeric strand. The polypeptide is Telomere repeat-binding factor 2 (TRB2) (Arabidopsis thaliana (Mouse-ear cress)).